We begin with the raw amino-acid sequence, 295 residues long: Excinuclease cho (295 aa).

In terms of domain architecture, GIY-YIG spans 33–108 (TRPGVYLFHG…IKEQQPLFNK (76 aa)).

Its function is as follows. Incises the DNA at the 3' side of a lesion during nucleotide excision repair. Incises the DNA farther away from the lesion than UvrC. Not able to incise the 5' site of a lesion. In vitro, the incision activity of Cho is UvrA and UvrB dependent. When a lesion remains because UvrC is not able to induce the 3' incision, Cho incises the DNA. Then UvrC makes the 5' incision. The combined action of Cho and UvrC broadens the substrate range of nucleotide excision repair. This chain is Excinuclease cho (cho), found in Escherichia coli (strain K12).